The primary structure comprises 438 residues: uncharacterized protein (438 aa).

This is an uncharacterized protein from Acanthamoeba polyphaga mimivirus (APMV).